The following is a 598-amino-acid chain: uncharacterized protein (598 aa).

The Mn(2+) site is built by Asp-397, Asp-408, Glu-506, and Glu-520.

This sequence belongs to the peptidase M24B family. It depends on Mn(2+) as a cofactor.

This is an uncharacterized protein from Schizosaccharomyces pombe (strain 972 / ATCC 24843) (Fission yeast).